Here is a 367-residue protein sequence, read N- to C-terminus: Mitogen-activated protein kinase 12 (367 aa).

In terms of domain architecture, Protein kinase spans Tyr27–Phe311. Residues Val33 to Val41 and Lys56 contribute to the ATP site. The Proton acceptor role is filled by Asp153. Position 183 is a phosphothreonine; by MAP2K3 and MAP2K6 (Thr183). The short motif at Thr183 to Tyr185 is the TXY element. The residue at position 185 (Tyr185) is a Phosphotyrosine.

Belongs to the protein kinase superfamily. CMGC Ser/Thr protein kinase family. MAP kinase subfamily. Monomer. Interacts with the PDZ domain of the syntrophin SNTA1. Interacts with SH3BP5. Interacts with LIN7C, SCRIB and SYNJ2BP. Interacts with PTPN4; this interaction induces the activation of PTPN4 phosphatase activity. Mg(2+) serves as cofactor. Post-translationally, dually phosphorylated on Thr-183 and Tyr-185 by MAP2K3/MKK3 and MAP2K6/MKK6, which activates the enzyme. Ubiquitinated. Ubiquitination leads to degradation by the proteasome pathway. As to expression, highly expressed in skeletal muscle and heart.

The protein resides in the cytoplasm. It localises to the nucleus. Its subcellular location is the mitochondrion. The enzyme catalyses L-seryl-[protein] + ATP = O-phospho-L-seryl-[protein] + ADP + H(+). It carries out the reaction L-threonyl-[protein] + ATP = O-phospho-L-threonyl-[protein] + ADP + H(+). Activated by phosphorylation on threonine and tyrosine. MAP2K3/MKK3 and MAP2K6/MKK6 are both essential for the activation of MAPK12 induced by environmental stress, whereas MAP2K6/MKK6 is the major MAPK12 activator in response to TNF-alpha. Its function is as follows. Serine/threonine kinase which acts as an essential component of the MAP kinase signal transduction pathway. MAPK12 is one of the four p38 MAPKs which play an important role in the cascades of cellular responses evoked by extracellular stimuli such as pro-inflammatory cytokines or physical stress leading to direct activation of transcription factors such as ELK1 and ATF2. Accordingly, p38 MAPKs phosphorylate a broad range of proteins and it has been estimated that they may have approximately 200 to 300 substrates each. Some of the targets are downstream kinases such as MAPKAPK2, which are activated through phosphorylation and further phosphorylate additional targets. Plays a role in myoblast differentiation and also in the down-regulation of cyclin D1 in response to hypoxia in adrenal cells suggesting MAPK12 may inhibit cell proliferation while promoting differentiation. Phosphorylates DLG1. Following osmotic shock, MAPK12 in the cell nucleus increases its association with nuclear DLG1, thereby causing dissociation of DLG1-SFPQ complexes. This function is independent of its catalytic activity and could affect mRNA processing and/or gene transcription to aid cell adaptation to osmolarity changes in the environment. Regulates UV-induced checkpoint signaling and repair of UV-induced DNA damage and G2 arrest after gamma-radiation exposure. MAPK12 is involved in the regulation of SLC2A1 expression and basal glucose uptake in L6 myotubes; and negatively regulates SLC2A4 expression and contraction-mediated glucose uptake in adult skeletal muscle. C-Jun (JUN) phosphorylation is stimulated by MAPK14 and inhibited by MAPK12, leading to a distinct AP-1 regulation. MAPK12 is required for the normal kinetochore localization of PLK1, prevents chromosomal instability and supports mitotic cell viability. MAPK12-signaling is also positively regulating the expansion of transient amplifying myogenic precursor cells during muscle growth and regeneration. The protein is Mitogen-activated protein kinase 12 (MAPK12) of Homo sapiens (Human).